The sequence spans 573 residues: uncharacterized protein (573 aa).

In terms of domain architecture, ABC transmembrane type-1 spans 15–298 (AGIALILMLT…FPFLIMIFTR (284 aa)). A run of 6 helical transmembrane segments spans residues 17 to 37 (IALI…LLIA), 52 to 72 (VWIW…AGML), 127 to 147 (IFMS…GIVL), 153 to 173 (VKLG…LLWV), 238 to 258 (FTMP…LWAG), and 275 to 295 (IINY…LIMI). Residues 330-563 (IEFQHVSFRY…SQLYKRIYES (234 aa)) form the ABC transporter domain. 364–371 (GATGSGKS) is an ATP binding site.

The protein belongs to the ABC transporter superfamily.

Its subcellular location is the cell membrane. This is an uncharacterized protein from Bacillus subtilis (strain 168).